A 406-amino-acid chain; its full sequence is Leucine aminopeptidase 1 (406 aa).

The N-terminal stretch at 1-18 (MKVTNASLLALLLPAVSG) is a signal peptide. The propeptide occupies 19–94 (RFVETGEPDR…LRAMTASRKK (76 aa)). N-linked (GlcNAc...) asparagine glycosylation is present at Asn186. Zn(2+) contacts are provided by His194, Asp213, Glu252, and Asp279. Residue Asn306 is glycosylated (N-linked (GlcNAc...) asparagine). Cys328 and Cys332 are oxidised to a cystine. Zn(2+) is bound at residue His361.

The protein belongs to the peptidase M28 family. M28E subfamily. Monomer. It depends on Zn(2+) as a cofactor.

It localises to the secreted. Extracellular aminopeptidase that allows assimilation of proteinaceous substrates. In Chaetomium globosum (strain ATCC 6205 / CBS 148.51 / DSM 1962 / NBRC 6347 / NRRL 1970) (Soil fungus), this protein is Leucine aminopeptidase 1 (LAP1).